Reading from the N-terminus, the 322-residue chain is Porphobilinogen deaminase (322 aa).

C252 is modified (S-(dipyrrolylmethanemethyl)cysteine).

It belongs to the HMBS family. As to quaternary structure, monomer. It depends on dipyrromethane as a cofactor.

It carries out the reaction 4 porphobilinogen + H2O = hydroxymethylbilane + 4 NH4(+). It participates in porphyrin-containing compound metabolism; protoporphyrin-IX biosynthesis; coproporphyrinogen-III from 5-aminolevulinate: step 2/4. In terms of biological role, tetrapolymerization of the monopyrrole PBG into the hydroxymethylbilane pre-uroporphyrinogen in several discrete steps. The protein is Porphobilinogen deaminase of Caulobacter vibrioides (strain ATCC 19089 / CIP 103742 / CB 15) (Caulobacter crescentus).